A 370-amino-acid chain; its full sequence is Death-associated protein kinase 2 (370 aa).

Residues 23–285 (YDIGEELGSG…IQEALRHPWI (263 aa)) enclose the Protein kinase domain. ATP contacts are provided by residues 29–37 (LGSGQFAIV) and K52. Residue D149 is the Proton acceptor of the active site. The segment at 277–344 (QEALRHPWIT…KVHLRPDEDL (68 aa)) is calmodulin-binding. Residues 292-301 (QAMVRRESVV) are autoinhibitory domain. Position 299 is a phosphoserine (S299). S318 carries the phosphoserine; by autocatalysis modification. Residues 348–370 (ESDTEEDIARRKALHPRRRSSTS) form a disordered region. S349 is subject to Phosphoserine. Positions 358–370 (RKALHPRRRSSTS) are enriched in basic residues. At T369 the chain carries Phosphothreonine; by PKB/AKT1.

Belongs to the protein kinase superfamily. CAMK Ser/Thr protein kinase family. DAP kinase subfamily. In terms of assembly, homodimer in its autoinhibited state. Active as monomer. Isoform 2 but not isoform 1 can interact with ATF4. Interacts with 14-3-3 proteins YWHAB, YWHAE, YWHAG, YWHAH, YWHAQ, YWHAZ and SFN; the interaction requires DAPK2 phosphorylation at Thr-369 and suppresses DAPK2 kinase activity and DAPK2-induced apoptosis. Requires Mg(2+) as cofactor. In terms of processing, autophosphorylation at Ser-318 inhibits its catalytic activity. Dephosphorylated at Ser-318 in response to activated Fas and TNF-alpha receptors. Expressed in neutrophils and eosinophils. Isoform 2 is expressed in embryonic stem cells (at protein level). Isoform 1 is ubiquitously expressed in all tissue types examined with high levels in heart, lung and skeletal muscle.

It localises to the cytoplasm. The protein resides in the cytoplasmic vesicle. Its subcellular location is the autophagosome lumen. It carries out the reaction L-seryl-[protein] + ATP = O-phospho-L-seryl-[protein] + ADP + H(+). It catalyses the reaction L-threonyl-[protein] + ATP = O-phospho-L-threonyl-[protein] + ADP + H(+). Activated by Ca(2+)/calmodulin. Regulated by a double locking mechanism, involving autophosphorylation at Ser-318, calmodulin binding, and dimerization. In the inactive state, Ser-318 is phosphorylated, and the kinase is dimeric. Activation involves: dephosphorylation at Ser-318, release-of-autoinhibition mechanism where calmodulin binding induces a conformational change that relieves the steric block of the active site by the autoinhibitory domain, and generation of the monomeric active form of the kinase. Its function is as follows. Calcium/calmodulin-dependent serine/threonine kinase involved in multiple cellular signaling pathways that trigger cell survival, apoptosis, and autophagy. Regulates both type I apoptotic and type II autophagic cell death signals, depending on the cellular setting. The former is caspase-dependent, while the latter is caspase-independent and is characterized by the accumulation of autophagic vesicles. Acts as a mediator of anoikis and a suppressor of beta-catenin-dependent anchorage-independent growth of malignant epithelial cells. May play a role in granulocytic maturation. Regulates granulocytic motility by controlling cell spreading and polarization. In terms of biological role, isoform 2 is not regulated by calmodulin. It can phosphorylate MYL9. It can induce membrane blebbing and autophagic cell death. The chain is Death-associated protein kinase 2 (DAPK2) from Homo sapiens (Human).